The following is a 322-amino-acid chain: Homoserine kinase (322 aa).

An ATP-binding site is contributed by 107–117 (PLSSGMGGSAA).

It belongs to the GHMP kinase family. Homoserine kinase subfamily.

It is found in the cytoplasm. It catalyses the reaction L-homoserine + ATP = O-phospho-L-homoserine + ADP + H(+). It functions in the pathway amino-acid biosynthesis; L-threonine biosynthesis; L-threonine from L-aspartate: step 4/5. In terms of biological role, catalyzes the ATP-dependent phosphorylation of L-homoserine to L-homoserine phosphate. In Xylella fastidiosa (strain 9a5c), this protein is Homoserine kinase.